The sequence spans 472 residues: UDP-N-acetylmuramoyl-L-alanyl-D-glutamate--2,6-diaminopimelate ligase (472 aa).

S21 serves as a coordination point for UDP-N-acetyl-alpha-D-muramoyl-L-alanyl-D-glutamate. 99 to 105 (GTNGKTS) is a binding site for ATP. UDP-N-acetyl-alpha-D-muramoyl-L-alanyl-D-glutamate is bound by residues 143–144 (TT), S170, Q176, and R178. K210 carries the post-translational modification N6-carboxylysine. Meso-2,6-diaminopimelate contacts are provided by residues R367, 391-394 (DNPR), G440, and E444. Residues 391 to 394 (DNPR) carry the Meso-diaminopimelate recognition motif motif.

Belongs to the MurCDEF family. MurE subfamily. Mg(2+) serves as cofactor. In terms of processing, carboxylation is probably crucial for Mg(2+) binding and, consequently, for the gamma-phosphate positioning of ATP.

It is found in the cytoplasm. It carries out the reaction UDP-N-acetyl-alpha-D-muramoyl-L-alanyl-D-glutamate + meso-2,6-diaminopimelate + ATP = UDP-N-acetyl-alpha-D-muramoyl-L-alanyl-gamma-D-glutamyl-meso-2,6-diaminopimelate + ADP + phosphate + H(+). It functions in the pathway cell wall biogenesis; peptidoglycan biosynthesis. In terms of biological role, catalyzes the addition of meso-diaminopimelic acid to the nucleotide precursor UDP-N-acetylmuramoyl-L-alanyl-D-glutamate (UMAG) in the biosynthesis of bacterial cell-wall peptidoglycan. This Anaplasma marginale (strain St. Maries) protein is UDP-N-acetylmuramoyl-L-alanyl-D-glutamate--2,6-diaminopimelate ligase.